Here is a 264-residue protein sequence, read N- to C-terminus: Thymidylate synthase (264 aa).

DUMP is bound at residue Arg21. His51 contacts (6R)-5,10-methylene-5,6,7,8-tetrahydrofolate. Residue 126-127 participates in dUMP binding; it reads RR. The active-site Nucleophile is Cys146. DUMP-binding positions include 166–169, Asn177, and 207–209; these read RSAD and HLY. Position 169 (Asp169) interacts with (6R)-5,10-methylene-5,6,7,8-tetrahydrofolate. Ala263 contributes to the (6R)-5,10-methylene-5,6,7,8-tetrahydrofolate binding site.

It belongs to the thymidylate synthase family. Bacterial-type ThyA subfamily. Homodimer.

It is found in the cytoplasm. It carries out the reaction dUMP + (6R)-5,10-methylene-5,6,7,8-tetrahydrofolate = 7,8-dihydrofolate + dTMP. The protein operates within pyrimidine metabolism; dTTP biosynthesis. Its function is as follows. Catalyzes the reductive methylation of 2'-deoxyuridine-5'-monophosphate (dUMP) to 2'-deoxythymidine-5'-monophosphate (dTMP) while utilizing 5,10-methylenetetrahydrofolate (mTHF) as the methyl donor and reductant in the reaction, yielding dihydrofolate (DHF) as a by-product. This enzymatic reaction provides an intracellular de novo source of dTMP, an essential precursor for DNA biosynthesis. The chain is Thymidylate synthase from Ralstonia nicotianae (strain ATCC BAA-1114 / GMI1000) (Ralstonia solanacearum).